The chain runs to 1269 residues: ATP-dependent helicase/nuclease subunit A (1269 aa).

In terms of domain architecture, UvrD-like helicase ATP-binding spans 17 to 492; the sequence is GGWTAEQLEA…LALTANFRSR (476 aa). Residue 38 to 45 participates in ATP binding; sequence ASAGTGKT. A UvrD-like helicase C-terminal domain is found at 541–838; it reads AVELHLVERG…RIMSIHKSKG (298 aa).

The protein belongs to the helicase family. AddA subfamily. As to quaternary structure, heterodimer of AddA and AddB/RexB. Mg(2+) serves as cofactor.

It carries out the reaction Couples ATP hydrolysis with the unwinding of duplex DNA by translocating in the 3'-5' direction.. The catalysed reaction is ATP + H2O = ADP + phosphate + H(+). Its function is as follows. The heterodimer acts as both an ATP-dependent DNA helicase and an ATP-dependent, dual-direction single-stranded exonuclease. Recognizes the chi site generating a DNA molecule suitable for the initiation of homologous recombination. The AddA nuclease domain is required for chi fragment generation; this subunit has the helicase and 3' -&gt; 5' nuclease activities. The sequence is that of ATP-dependent helicase/nuclease subunit A from Pelotomaculum thermopropionicum (strain DSM 13744 / JCM 10971 / SI).